The following is a 116-amino-acid chain: Aspartate 1-decarboxylase (116 aa).

The active-site Schiff-base intermediate with substrate; via pyruvic acid is S25. S25 carries the post-translational modification Pyruvic acid (Ser). A substrate-binding site is contributed by T57. Y58 serves as the catalytic Proton donor. 73–75 lines the substrate pocket; that stretch reads GAA.

It belongs to the PanD family. As to quaternary structure, heterooctamer of four alpha and four beta subunits. Pyruvate serves as cofactor. Post-translationally, is synthesized initially as an inactive proenzyme, which is activated by self-cleavage at a specific serine bond to produce a beta-subunit with a hydroxyl group at its C-terminus and an alpha-subunit with a pyruvoyl group at its N-terminus.

It is found in the cytoplasm. It catalyses the reaction L-aspartate + H(+) = beta-alanine + CO2. Its pathway is cofactor biosynthesis; (R)-pantothenate biosynthesis; beta-alanine from L-aspartate: step 1/1. Catalyzes the pyruvoyl-dependent decarboxylation of aspartate to produce beta-alanine. This chain is Aspartate 1-decarboxylase, found in Christiangramia forsetii (strain DSM 17595 / CGMCC 1.15422 / KT0803) (Gramella forsetii).